We begin with the raw amino-acid sequence, 407 residues long: MTAHCPEDPSLERHFKGHRDAVTSVDFSLNTKQLASGSMDSCLMVWHMKPQTRAYRFAGHKDAVTCVNFSPSGHLLASGSRDKTVRIWVPNVKGESTVFRAHTATVRSVHFCSDGQSFVTASDDKTVKVWSTHRQKFLFSLSQHINWVRCAKFSPDGRLIVSASDDKTVKLWDKTSRECVHSYCEHGGFVTYVDFHPSGTCIAAAGMDNTVKVWDVRTHRLLQHYQLHSAAVNALSFHPSGNYLVTASSDSTLKILDLMEGRLLYTLHGHQGPATTVAFSRTGEYFASGGSDEQVMVWKSNFDIVDYGEVLRVQRPPATRASSSGTLPEVDPLVPPGRGRSQESMQSHSQEPVSVPQSLTSTLEHIVGQLDVLTQTVSILEQRLTLTEDKLKQCLENQQLIMQRTTP.

7 WD repeats span residues 17–56 (GHRD…RAYR), 59–98 (GHKD…ESTV), 101–140 (AHTA…FLFS), 143–182 (QHIN…CVHS), 185–224 (EHGG…LLQH), 227–266 (LHSA…LLYT), and 269–308 (GHQG…VDYG). The disordered stretch occupies residues 317-357 (PATRASSSGTLPEVDPLVPPGRGRSQESMQSHSQEPVSVPQ). Positions 342-357 (QESMQSHSQEPVSVPQ) are enriched in polar residues. Residues 369-397 (QLDVLTQTVSILEQRLTLTEDKLKQCLEN) are a coiled coil.

It belongs to the WD repeat POC1 family. Interacts with POC1B.

It is found in the cytoplasm. It localises to the cytoskeleton. The protein localises to the microtubule organizing center. Its subcellular location is the centrosome. The protein resides in the centriole. It is found in the cilium basal body. It localises to the spindle pole. Plays an important role in centriole assembly and/or stability and ciliogenesis. Involved in early steps of centriole duplication, as well as in the later steps of centriole length control. Acts in concert with POC1B to ensure centriole integrity and proper mitotic spindle formation. The sequence is that of POC1 centriolar protein homolog A (POC1A) from Bos taurus (Bovine).